Consider the following 117-residue polypeptide: Large ribosomal subunit protein bL19 (117 aa).

Belongs to the bacterial ribosomal protein bL19 family.

This protein is located at the 30S-50S ribosomal subunit interface and may play a role in the structure and function of the aminoacyl-tRNA binding site. In Alkaliphilus metalliredigens (strain QYMF), this protein is Large ribosomal subunit protein bL19.